A 159-amino-acid chain; its full sequence is MSNLNLATLDISEHANLPTSSEVLFKAKADKKLSFESIAAAIGRNEVATAAIFYGQAKASEEDIAKLAQVLEIDHAHLESLLSGFPDRGKSVSFPPKDPLIYRLYEIVQNYGYAYKAVMNEKFGDGIMSAISFSTTVEKETDKDGNNWAVVTWRGKWYV.

Catalysis depends on residues arginine 103, glutamate 106, and serine 129.

It belongs to the cyanase family.

It catalyses the reaction cyanate + hydrogencarbonate + 3 H(+) = NH4(+) + 2 CO2. In terms of biological role, catalyzes the reaction of cyanate with bicarbonate to produce ammonia and carbon dioxide. The chain is Cyanate hydratase from Blastomyces gilchristii (strain SLH14081) (Blastomyces dermatitidis).